We begin with the raw amino-acid sequence, 172 residues long: Small ribosomal subunit protein uS5 (172 aa).

The region spanning 17 to 80 is the S5 DRBM domain; the sequence is LREKMISVNR…EQARRNMFKV (64 aa).

Belongs to the universal ribosomal protein uS5 family. In terms of assembly, part of the 30S ribosomal subunit. Contacts proteins S4 and S8.

In terms of biological role, with S4 and S12 plays an important role in translational accuracy. Its function is as follows. Located at the back of the 30S subunit body where it stabilizes the conformation of the head with respect to the body. The protein is Small ribosomal subunit protein uS5 of Paraburkholderia phymatum (strain DSM 17167 / CIP 108236 / LMG 21445 / STM815) (Burkholderia phymatum).